We begin with the raw amino-acid sequence, 190 residues long: Potassium-transporting ATPase KdpC subunit (190 aa).

The helical transmembrane segment at 10-30 threads the bilayer; sequence TFIFLLLITGGVYPLLTTVLG.

This sequence belongs to the KdpC family. In terms of assembly, the system is composed of three essential subunits: KdpA, KdpB and KdpC.

It is found in the cell inner membrane. Part of the high-affinity ATP-driven potassium transport (or Kdp) system, which catalyzes the hydrolysis of ATP coupled with the electrogenic transport of potassium into the cytoplasm. This subunit acts as a catalytic chaperone that increases the ATP-binding affinity of the ATP-hydrolyzing subunit KdpB by the formation of a transient KdpB/KdpC/ATP ternary complex. The sequence is that of Potassium-transporting ATPase KdpC subunit from Escherichia coli (strain 55989 / EAEC).